A 436-amino-acid chain; its full sequence is Tol-Pal system protein TolB (436 aa).

The N-terminal stretch at 1 to 28 (MRSFLKPLLTIAAMALGMTAVIPMPAWA) is a signal peptide.

It belongs to the TolB family. In terms of assembly, the Tol-Pal system is composed of five core proteins: the inner membrane proteins TolA, TolQ and TolR, the periplasmic protein TolB and the outer membrane protein Pal. They form a network linking the inner and outer membranes and the peptidoglycan layer.

It localises to the periplasm. Functionally, part of the Tol-Pal system, which plays a role in outer membrane invagination during cell division and is important for maintaining outer membrane integrity. This is Tol-Pal system protein TolB from Mesorhizobium japonicum (strain LMG 29417 / CECT 9101 / MAFF 303099) (Mesorhizobium loti (strain MAFF 303099)).